The primary structure comprises 170 residues: Type IV pilus assembly protein C (170 aa).

A signal peptide spans 1–23 (MKSKLPLILINLSLISSPLGANA). The segment at 87–107 (KTVSKPAKSNTPPQQAPVNNS) is disordered. The span at 93–107 (AKSNTPPQQAPVNNS) shows a compositional bias: polar residues. The stretch at 109-166 (RSILEAELSNERKALTEAQKMLSQARLAKGGNINHQKINALQSNVLDRQQNIQALQRE) forms a coiled coil.

It is found in the periplasm. Functionally, required for stabilizing type IV pilus (T4p) in extended, nonretracted conformation on the bacterial cell surface. The polypeptide is Type IV pilus assembly protein C (Neisseria gonorrhoeae (strain ATCC 700825 / FA 1090)).